We begin with the raw amino-acid sequence, 259 residues long: L-cystine import ATP-binding protein TcyN (259 aa).

Residues 2–239 (IEIKNIHKQF…TKKDRTRQFL (238 aa)) enclose the ABC transporter domain. 34–41 (GPSGSGKT) is a binding site for ATP.

Belongs to the ABC transporter superfamily. L-cystine importer (TC 3.A.1.3.13) family. The complex is composed of two ATP-binding proteins (TcyN), two transmembrane proteins (TcyL and TcyM) and two solute-binding proteins (TcyJ and TcyK).

Its subcellular location is the cell membrane. Its function is as follows. Part of the ABC transporter complex TcyJKLMN involved in L-cystine import. Responsible for energy coupling to the transport system. Is also involved in cystathionine, djenkolate, and S-methylcysteine transport. The chain is L-cystine import ATP-binding protein TcyN (tcyN) from Bacillus subtilis (strain 168).